Here is a 385-residue protein sequence, read N- to C-terminus: Protein GOLM2 (385 aa).

The Cytoplasmic portion of the chain corresponds to 1-12 (MVGFGAPRRTGR). The chain crosses the membrane as a helical; Signal-anchor for type II membrane protein span at residues 13-33 (LPPFVLVALLAVIGLLAFNYW). At 34–385 (SVSARQAALH…YHKDHLNETL (352 aa)) the chain is on the lumenal side. Positions 44–193 (DELLGLQAQV…KEELDKQPQK (150 aa)) form a coiled coil. Positions 169–385 (LAERKREYEE…YHKDHLNETL (217 aa)) are disordered. 2 stretches are compositionally biased toward basic and acidic residues: residues 170–193 (AERK…QPQK) and 211–220 (EVKEKIEDPS). The span at 265–283 (LPSQSKSLLEKQPSLQPLS) shows a compositional bias: polar residues. Positions 285–299 (TEHEVKKPLPDKKET) are enriched in basic and acidic residues. Residues 356-367 (NGDDGNVEDDDH) show a composition bias toward acidic residues. Residues 368–385 (DGQADAGEYHKDHLNETL) are compositionally biased toward basic and acidic residues.

Belongs to the GOLM family.

Its subcellular location is the membrane. The protein is Protein GOLM2 (golm2) of Xenopus laevis (African clawed frog).